The chain runs to 407 residues: Na(+)-translocating NADH-quinone reductase subunit F (407 aa).

Residues 3 to 23 (IILGVVMFTLIVLALVLVILF) form a helical membrane-spanning segment. The region spanning 32-126 (GDITISVNGD…DMDIELPEEI (95 aa)) is the 2Fe-2S ferredoxin-type domain. [2Fe-2S] cluster is bound by residues C69, C75, C78, and C110. The FAD-binding FR-type domain occupies 129–269 (VKKWECTVIS…SGPFGEFFAK (141 aa)). Positions 272–389 (DAEMVFIGGG…PMMNAAVIGM (118 aa)) are catalytic.

The protein belongs to the NqrF family. In terms of assembly, composed of six subunits; NqrA, NqrB, NqrC, NqrD, NqrE and NqrF. The cofactor is [2Fe-2S] cluster. FAD serves as cofactor.

It is found in the cell inner membrane. The enzyme catalyses a ubiquinone + n Na(+)(in) + NADH + H(+) = a ubiquinol + n Na(+)(out) + NAD(+). NQR complex catalyzes the reduction of ubiquinone-1 to ubiquinol by two successive reactions, coupled with the transport of Na(+) ions from the cytoplasm to the periplasm. The first step is catalyzed by NqrF, which accepts electrons from NADH and reduces ubiquinone-1 to ubisemiquinone by a one-electron transfer pathway. This Vibrio parahaemolyticus serotype O3:K6 (strain RIMD 2210633) protein is Na(+)-translocating NADH-quinone reductase subunit F.